Reading from the N-terminus, the 321-residue chain is LIMR family protein SELMODRAFT_432210 (321 aa).

Helical transmembrane passes span 28–48, 116–133, 139–159, 240–260, and 284–304; these read KQLW…VIPF, CFSL…LDLW, LCVF…FGGV, LVFG…ILVF, and LLGT…VISG.

Belongs to the LIMR family.

The protein resides in the membrane. This chain is LIMR family protein SELMODRAFT_432210, found in Selaginella moellendorffii (Spikemoss).